Reading from the N-terminus, the 63-residue chain is MSRRCAITGKSAMNGHSVSHANNKTKKKFGVNLRTIRIKLEDGSTTKIKVAASTLRTMKKASK.

The tract at residues 1–22 (MSRRCAITGKSAMNGHSVSHAN) is disordered.

It belongs to the bacterial ribosomal protein bL28 family.

The protein is Large ribosomal subunit protein bL28 of Campylobacter hominis (strain ATCC BAA-381 / DSM 21671 / CCUG 45161 / LMG 19568 / NCTC 13146 / CH001A).